Reading from the N-terminus, the 518-residue chain is MGKLDLDWGLVKEARESAKKIAADAQVFIDAHSTVTVERTICRLLGIDGVDEFGVPLPNVIVDFIKDNGNISLGVAKYIGNAMIETKLQPQEIAEKVAKKELDITKMQWHDDFDIQLALKDITHSTVERIKANRKAREDYLEQFGGDKKGPYIYVIVATGNIYEDVTQAVAAARQGADVVAVIRTTGQSLLDFVPFGATTEGFGGTMATQENFRIMRKALDDVGVELGRYIRLCNYCSGLCMPEIAAMGALERLDMMLNDALYGILFRDINMKRTLVDQFFSRIINGFAGVIINTGEDNYLTTADAIEEAHTVLASQFINEQFALVAGLPEEQMGLGHAFEMEPGTENGFLLELAQAQMAREIFPKAPLKYMPPTKFMTGNIFKGHIQDALFNIVTITTGQKVHLLGMLTEAIHTPFMSDRALSIENARYIFNNLKDFGNDIEFKKGGIMNTRAQEVLKKAAELLKTIETMGIFKTIEKGVFGGVRRPIDGGKGLAGVFEKDNTYFNPFIPLMLGGDR.

Residues arginine 184 to serine 189, serine 238, tyrosine 263, arginine 268, and asparagine 299 contribute to the pyridoxal 5'-phosphate site.

Belongs to the KamD family. As to quaternary structure, heterotetramer of 2 alpha and 2 beta subunits. Adenosylcob(III)alamin is required as a cofactor. It depends on pyridoxal 5'-phosphate as a cofactor.

The catalysed reaction is (3S)-3,6-diaminohexanoate = (3S,5S)-3,5-diaminohexanoate. It catalyses the reaction D-lysine = (2R,5S)-2,5-diaminohexanoate. It functions in the pathway amino-acid degradation; L-lysine degradation via acetate pathway. Its function is as follows. Catalyzes the migration of the L-beta-lysine and D-lysine epsilon amino group to the delta carbon to produce 3,5-diaminohexanoate and 2,5-diaminohexanoate, respectively. This chain is Lysine 5,6-aminomutase alpha subunit, found in Fusobacterium nucleatum subsp. nucleatum (strain ATCC 25586 / DSM 15643 / BCRC 10681 / CIP 101130 / JCM 8532 / KCTC 2640 / LMG 13131 / VPI 4355).